The primary structure comprises 627 residues: (-)-beta-pinene synthase 1, chloroplastic (627 aa).

A chloroplast-targeting transit peptide spans Met1–Ala50. Asp378, Asp382, and Asp530 together coordinate Mg(2+). The DDXXD motif signature appears at Asp378–Asp382.

The protein belongs to the terpene synthase family. Tpsd subfamily. Mg(2+) serves as cofactor. The cofactor is Mn(2+).

It is found in the plastid. It localises to the chloroplast. The enzyme catalyses (2E)-geranyl diphosphate = (1S,5S)-beta-pinene + diphosphate. The catalysed reaction is (2E)-geranyl diphosphate = (1S,5S)-alpha-pinene + diphosphate. It functions in the pathway terpene metabolism; oleoresin biosynthesis. The protein operates within secondary metabolite biosynthesis; terpenoid biosynthesis. Its function is as follows. Monoterpene synthase (TPS) involved in the biosynthesis of monoterpene natural products included in conifer oleoresin secretions and volatile emissions; these compounds contribute to biotic and abiotic stress defense against herbivores and pathogens. Catalyzes the conversion of (2E)-geranyl diphosphate (GPP) to (-)-beta-pinene and, to a lower extent, to (-)-alpha-pinene. The polypeptide is (-)-beta-pinene synthase 1, chloroplastic (Pinus contorta (Shore pine)).